The primary structure comprises 94 residues: Small ribosomal subunit protein bS18 (94 aa).

This sequence belongs to the bacterial ribosomal protein bS18 family. Part of the 30S ribosomal subunit. Forms a tight heterodimer with protein bS6.

Binds as a heterodimer with protein bS6 to the central domain of the 16S rRNA, where it helps stabilize the platform of the 30S subunit. The protein is Small ribosomal subunit protein bS18 of Leptothrix cholodnii (strain ATCC 51168 / LMG 8142 / SP-6) (Leptothrix discophora (strain SP-6)).